We begin with the raw amino-acid sequence, 264 residues long: Interleukin-33 (264 aa).

Residues 1–67 (MRPRMKYSNS…ETCYFGKEPA (67 aa)) are homeodomain-like HTH domain. Residues 1-101 (MRPRMKYSNS…RSLLGSIQAF (101 aa)) constitute a propeptide that is removed on maturation. The tract at residues 66–108 (PAKRYSLKSGSKHEGRLSTCLPDSRKRSLLGSIQAFAASVDTL) is interaction with RELA.

It belongs to the IL-1 family. Highly divergent. As to quaternary structure, forms a 1:1:1 heterotrimeric complex with its primary high-affinity receptor IL1RL1 and the coreceptor IL1RAP. Interacts with cargo receptor TMED10; the interaction mediates the translocation from the cytoplasm into the ERGIC (endoplasmic reticulum-Golgi intermediate compartment) and thereby secretion. The full-length protein can be released from cells and is able to signal via the IL1RL1/ST2 receptor. However, proteolytic processing by CELA1, CSTG/cathepsin G and ELANE/neutrophil elastase produces C-terminal peptides that are more active than the unprocessed full-length protein. May also be proteolytically processed by calpains. Proteolytic cleavage mediated by apoptotic caspases including CASP3 and CASP7 results in IL33 inactivation. In vitro proteolytic cleavage by CASP1 was reported but could not be confirmed in vivo suggesting that IL33 is probably not a direct substrate for that caspase.

It is found in the nucleus. The protein localises to the chromosome. Its subcellular location is the cytoplasm. It localises to the cytoplasmic vesicle. The protein resides in the secretory vesicle. It is found in the secreted. Its function is as follows. Cytokine that binds to and signals through the IL1RL1/ST2 receptor which in turn activates NF-kappa-B and MAPK signaling pathways in target cells. Involved in the maturation of Th2 cells inducing the secretion of T-helper type 2-associated cytokines. Also involved in activation of mast cells, basophils, eosinophils and natural killer cells. Acts as a chemoattractant for Th2 cells, and may function as an 'alarmin', that amplifies immune responses during tissue injury. Induces rapid UCP2-dependent mitochondrial rewiring that attenuates the generation of reactive oxygen species and preserves the integrity of Krebs cycle required for persistent production of itaconate and subsequent GATA3-dependent differentiation of inflammation-resolving alternatively activated macrophages. Functionally, in quiescent endothelia the uncleaved form is constitutively and abundantly expressed, and acts as a chromatin-associated nuclear factor with transcriptional repressor properties, it may sequester nuclear NF-kappaB/RELA, lowering expression of its targets. This form is rapidely lost upon angiogenic or pro-inflammatory activation. The chain is Interleukin-33 from Rattus norvegicus (Rat).